The sequence spans 430 residues: Adenylosuccinate synthetase (430 aa).

GTP-binding positions include 13-19 (GDEGKGK) and 41-43 (GHT). Asp-14 acts as the Proton acceptor in catalysis. Mg(2+) is bound by residues Asp-14 and Gly-41. IMP-binding positions include 14 to 17 (DEGK), 39 to 42 (NAGH), Thr-130, Arg-144, Gln-225, Thr-240, and Arg-304. His-42 serves as the catalytic Proton donor. Residue 300–306 (ASTGRPR) coordinates substrate. Residues Arg-306, 332–334 (KLD), and 414–416 (STG) contribute to the GTP site.

This sequence belongs to the adenylosuccinate synthetase family. In terms of assembly, homodimer. Mg(2+) is required as a cofactor.

The protein resides in the cytoplasm. The enzyme catalyses IMP + L-aspartate + GTP = N(6)-(1,2-dicarboxyethyl)-AMP + GDP + phosphate + 2 H(+). Its pathway is purine metabolism; AMP biosynthesis via de novo pathway; AMP from IMP: step 1/2. Its function is as follows. Plays an important role in the de novo pathway of purine nucleotide biosynthesis. Catalyzes the first committed step in the biosynthesis of AMP from IMP. The protein is Adenylosuccinate synthetase of Xanthomonas oryzae pv. oryzae (strain PXO99A).